Reading from the N-terminus, the 432-residue chain is uncharacterized protein (432 aa).

SIS domains lie at 105-244 (WLTE…DLVS) and 277-422 (CDKK…VDLP).

This is an uncharacterized protein from Saccharomyces cerevisiae (strain Lalvin EC1118 / Prise de mousse) (Baker's yeast).